We begin with the raw amino-acid sequence, 610 residues long: UvrABC system protein C (610 aa).

A GIY-YIG domain is found at 16–94; that stretch reads HQPGVYRMYN…IKQYLPKYNV (79 aa). The 36-residue stretch at 204–239 folds into the UVR domain; it reads NQVLELLVQKMEIASQQLKFEDAAKFRDQIQAIRRV.

Belongs to the UvrC family. In terms of assembly, interacts with UvrB in an incision complex.

The protein resides in the cytoplasm. Its function is as follows. The UvrABC repair system catalyzes the recognition and processing of DNA lesions. UvrC both incises the 5' and 3' sides of the lesion. The N-terminal half is responsible for the 3' incision and the C-terminal half is responsible for the 5' incision. This Vibrio vulnificus (strain CMCP6) protein is UvrABC system protein C.